A 607-amino-acid polypeptide reads, in one-letter code: UvrABC system protein C (607 aa).

Residues 16–94 (GRPGVYRMFD…IKEWRPPYNI (79 aa)) form the GIY-YIG domain. One can recognise a UVR domain in the interval 203–238 (HALTNELSTAMEEAAINLEFERAAELRDQIALLRRV).

It belongs to the UvrC family. Interacts with UvrB in an incision complex.

It localises to the cytoplasm. Functionally, the UvrABC repair system catalyzes the recognition and processing of DNA lesions. UvrC both incises the 5' and 3' sides of the lesion. The N-terminal half is responsible for the 3' incision and the C-terminal half is responsible for the 5' incision. The polypeptide is UvrABC system protein C (Pseudomonas fluorescens (strain Pf0-1)).